We begin with the raw amino-acid sequence, 452 residues long: Maltoporin (452 aa).

Positions 1-25 (MMITLRKLPLAVAVAAGVMSAQAMA) are cleaved as a signal peptide.

Belongs to the porin LamB (TC 1.B.3) family. Homotrimer formed of three 18-stranded antiparallel beta-barrels, containing three independent channels.

The protein resides in the cell outer membrane. It carries out the reaction beta-maltose(in) = beta-maltose(out). Its function is as follows. Involved in the transport of maltose and maltodextrins. The sequence is that of Maltoporin from Salmonella newport (strain SL254).